A 90-amino-acid chain; its full sequence is DNA-binding protein HRm (90 aa).

The protein belongs to the bacterial histone-like protein family.

Functionally, histone-like DNA-binding protein which is capable of wrapping DNA to stabilize it, and thus to prevent its denaturation under extreme environmental conditions. The chain is DNA-binding protein HRm (hupB) from Rhizobium meliloti (strain 1021) (Ensifer meliloti).